The chain runs to 241 residues: ATP synthase subunit a (241 aa).

A run of 5 helical transmembrane segments spans residues 30–50, 91–111, 128–148, 193–213, and 214–234; these read GQVF…ISVG, FIGT…LIPW, INTT…AGLS, LVVG…VMFL, and GLFT…YYIG.

This sequence belongs to the ATPase A chain family. In terms of assembly, F-type ATPases have 2 components, CF(1) - the catalytic core - and CF(0) - the membrane proton channel. CF(1) has five subunits: alpha(3), beta(3), gamma(1), delta(1), epsilon(1). CF(0) has four main subunits: a, b, b' and c.

Its subcellular location is the cellular thylakoid membrane. Functionally, key component of the proton channel; it plays a direct role in the translocation of protons across the membrane. The polypeptide is ATP synthase subunit a (Prochlorococcus marinus subsp. pastoris (strain CCMP1986 / NIES-2087 / MED4)).